We begin with the raw amino-acid sequence, 1078 residues long: Transmembrane protein 132B (1078 aa).

Residues 1–903 (MFGAASRMDT…LTDLEIGMYA (903 aa)) are Extracellular-facing. 3 N-linked (GlcNAc...) asparagine glycosylation sites follow: N343, N366, and N381. The interval 834 to 887 (RGTPVGQEESTNKSTTPQSPMEGKNKLLKSGGPDAFTSFPTQGKSPDPNNPSDL) is disordered. Over residues 841–852 (EESTNKSTTPQS) the composition is skewed to polar residues. Residues 904–924 (LLCVFCLAILVFLINCVAFAW) traverse the membrane as a helical segment. The Cytoplasmic segment spans residues 925 to 1078 (KYRHKRFAVS…DYMESLQDQM (154 aa)).

It belongs to the TMEM132 family.

The protein localises to the membrane. The protein is Transmembrane protein 132B (TMEM132B) of Homo sapiens (Human).